We begin with the raw amino-acid sequence, 179 residues long: Large ribosomal subunit protein uL6 (179 aa).

Residues 151-179 (RKPEPYKGKGIKYDNEQIRRKAGKSGGKK) form a disordered region. Basic and acidic residues predominate over residues 152-169 (KPEPYKGKGIKYDNEQIR). Over residues 170–179 (RKAGKSGGKK) the composition is skewed to basic residues.

The protein belongs to the universal ribosomal protein uL6 family. In terms of assembly, part of the 50S ribosomal subunit.

In terms of biological role, this protein binds to the 23S rRNA, and is important in its secondary structure. It is located near the subunit interface in the base of the L7/L12 stalk, and near the tRNA binding site of the peptidyltransferase center. This chain is Large ribosomal subunit protein uL6, found in Nitratidesulfovibrio vulgaris (strain ATCC 29579 / DSM 644 / CCUG 34227 / NCIMB 8303 / VKM B-1760 / Hildenborough) (Desulfovibrio vulgaris).